We begin with the raw amino-acid sequence, 306 residues long: Serine/threonine-protein phosphatase PP2A-2 catalytic subunit (306 aa).

Positions 54, 56, 82, and 114 each coordinate Mn(2+). The active-site Proton donor is His115. Residues His164 and His238 each contribute to the Mn(2+) site. Position 306 is a leucine methyl ester (Leu306).

This sequence belongs to the PPP phosphatase family. PP-2A subfamily. In terms of assembly, PP2A consists of a common heterodimeric core enzyme, composed of a 36 kDa catalytic subunit (subunit C) and a 65 kDa constant regulatory subunit (subunit A), that associates with a variety of regulatory subunits such as subunits B (the R2/B/PR55/B55, R3/B''/PR72/PR130/PR59 and R5/B'/B56 families). Interacts with B'THETA. Interacts with HDA14. Interacts with SRK2E/OST1. Interacts with TAP46. Requires Mn(2+) as cofactor. Post-translationally, reversibly methyl esterified on Leu-306 by leucine carboxyl methyltransferase 1 (LCMT1) and pectin methylesterase 1 (PME1). Carboxyl methylation influences the affinity of the catalytic subunit for the different regulatory subunits, thereby modulating the PP2A holoenzyme's substrate specificity, enzyme activity and cellular localization. In terms of processing, phosphorylation of either threonine (by autophosphorylation-activated protein kinase) or tyrosine results in inactivation of the phosphatase. Auto-dephosphorylation has been suggested as a mechanism for reactivation. As to expression, expressed in root meristem, emerging lateral roots, leaf vasculature, stipules, guard cells, anthers and pollen grains.

The protein resides in the cytoplasm. Its subcellular location is the cytosol. The protein localises to the nucleus. It localises to the peroxisome. It carries out the reaction O-phospho-L-seryl-[protein] + H2O = L-seryl-[protein] + phosphate. It catalyses the reaction O-phospho-L-threonyl-[protein] + H2O = L-threonyl-[protein] + phosphate. Its function is as follows. Dephosphorylates and activates the actin-depolymerizing factor ADF1, which, in turn, regulates actin cytoskeleton remodeling and is involved in the blue light photoreceptor PHOT2-mediated chloroplast avoidance movements. Associates with the serine/threonine-protein phosphatase PP2A regulatory subunits A and B' to positively regulates beta-oxidation of fatty acids and protoauxins in peroxisomes by dephosphorylating peroxisomal beta-oxidation-related proteins. Acts as a negative regulator of abscisic acid (ABA) signaling. May regulate ABA-dependent gene expression. Involved in the light-dependent activation of nitrate reductase. The protein is Serine/threonine-protein phosphatase PP2A-2 catalytic subunit of Arabidopsis thaliana (Mouse-ear cress).